The primary structure comprises 446 residues: Mannosyltransferase KTR6 (446 aa).

The Cytoplasmic portion of the chain corresponds to 1–8 (MHVLLSKK). A helical; Signal-anchor for type II membrane protein transmembrane segment spans residues 9–29 (IARFLLISFVFVLALMVTINH). The interval 30–114 (PKTKQMSEQY…MVPSYINHRG (85 aa)) is stem region. The Lumenal portion of the chain corresponds to 30–446 (PKTKQMSEQY…DKPEGWDRLP (417 aa)). N82 and N98 each carry an N-linked (GlcNAc...) asparagine glycan. The segment at 115–446 (SPPKACFVSL…DKPEGWDRLP (332 aa)) is catalytic. E334 acts as the Nucleophile in catalysis.

The protein belongs to the glycosyltransferase 15 family.

Its subcellular location is the membrane. Its pathway is protein modification; protein glycosylation. Its function is as follows. Glycosyltransferase that transfers an alpha-D-mannosyl residue from GDP-mannose into lipid-linked oligosaccharide, forming an alpha-(1-&gt;2)-D-mannosyl-D-mannose linkage. Required for addition of mannosylphosphate in yeast mannan. Recognizes any oligosaccharides with at least one alpha-1,2-linked mannobiose unit. In Saccharomyces cerevisiae (strain ATCC 204508 / S288c) (Baker's yeast), this protein is Mannosyltransferase KTR6 (KTR6).